Consider the following 595-residue polypeptide: Elongation factor 4 (595 aa).

Residues 2–184 (KNIRNFSIIA…QIVEKIPAPK (183 aa)) form the tr-type G domain. Residues 14–19 (DHGKST) and 131–134 (NKID) contribute to the GTP site.

Belongs to the TRAFAC class translation factor GTPase superfamily. Classic translation factor GTPase family. LepA subfamily.

The protein localises to the cell inner membrane. It catalyses the reaction GTP + H2O = GDP + phosphate + H(+). Required for accurate and efficient protein synthesis under certain stress conditions. May act as a fidelity factor of the translation reaction, by catalyzing a one-codon backward translocation of tRNAs on improperly translocated ribosomes. Back-translocation proceeds from a post-translocation (POST) complex to a pre-translocation (PRE) complex, thus giving elongation factor G a second chance to translocate the tRNAs correctly. Binds to ribosomes in a GTP-dependent manner. This chain is Elongation factor 4, found in Ruthia magnifica subsp. Calyptogena magnifica.